Here is a 253-residue protein sequence, read N- to C-terminus: Triosephosphate isomerase (253 aa).

A substrate-binding site is contributed by 9–11; sequence NWK. His-97 acts as the Electrophile in catalysis. Glu-169 functions as the Proton acceptor in the catalytic mechanism. Substrate is bound by residues Gly-175, Ser-215, and 236–237; that span reads GG.

This sequence belongs to the triosephosphate isomerase family. In terms of assembly, homodimer.

Its subcellular location is the cytoplasm. The catalysed reaction is D-glyceraldehyde 3-phosphate = dihydroxyacetone phosphate. It functions in the pathway carbohydrate biosynthesis; gluconeogenesis. It participates in carbohydrate degradation; glycolysis; D-glyceraldehyde 3-phosphate from glycerone phosphate: step 1/1. In terms of biological role, involved in the gluconeogenesis. Catalyzes stereospecifically the conversion of dihydroxyacetone phosphate (DHAP) to D-glyceraldehyde-3-phosphate (G3P). The chain is Triosephosphate isomerase from Staphylococcus haemolyticus (strain JCSC1435).